The primary structure comprises 97 residues: Large ribosomal subunit protein bL25 (97 aa).

It belongs to the bacterial ribosomal protein bL25 family. As to quaternary structure, part of the 50S ribosomal subunit; part of the 5S rRNA/L5/L18/L25 subcomplex. Contacts the 5S rRNA. Binds to the 5S rRNA independently of L5 and L18.

In terms of biological role, this is one of the proteins that binds to the 5S RNA in the ribosome where it forms part of the central protuberance. This chain is Large ribosomal subunit protein bL25, found in Buchnera aphidicola subsp. Baizongia pistaciae (strain Bp).